A 412-amino-acid polypeptide reads, in one-letter code: Allantoate amidohydrolase (412 aa).

Residues His-84, Asp-95, Glu-130, and His-193 each contribute to the Zn(2+) site. Positions 218, 278, and 291 each coordinate allantoate. His-385 contributes to the Zn(2+) binding site.

This sequence belongs to the peptidase M20 family. In terms of assembly, homodimer. It depends on Zn(2+) as a cofactor.

The protein resides in the cytoplasm. The catalysed reaction is allantoate + H2O + 2 H(+) = (S)-2-ureidoglycine + NH4(+) + CO2. Its pathway is nitrogen metabolism; (S)-allantoin degradation. Its function is as follows. Involved in the anaerobic nitrogen utilization via the assimilation of allantoin. Catalyzes specifically the hydrolysis of allantoate to yield CO2, NH3 and S-ureidoglycine, which is unstable and readily undergoes a second deamination by S-ureidoglycine aminohydrolase AllE to yield S-ureidoglycolate and NH3. The chain is Allantoate amidohydrolase from Bacillus subtilis (strain 168).